We begin with the raw amino-acid sequence, 245 residues long: DNA polymerase sliding clamp (245 aa).

It belongs to the PCNA family. As to quaternary structure, homotrimer. The subunits circularize to form a toroid; DNA passes through its center. Replication factor C (RFC) is required to load the toroid on the DNA.

Its function is as follows. Sliding clamp subunit that acts as a moving platform for DNA processing. Responsible for tethering the catalytic subunit of DNA polymerase and other proteins to DNA during high-speed replication. This is DNA polymerase sliding clamp from Picrophilus torridus (strain ATCC 700027 / DSM 9790 / JCM 10055 / NBRC 100828 / KAW 2/3).